The following is a 274-amino-acid chain: 4-deoxy-L-threo-5-hexosulose-uronate ketol-isomerase (274 aa).

Residues H192, H194, E199, and H241 each coordinate Zn(2+).

Belongs to the KduI family. The cofactor is Zn(2+).

The catalysed reaction is 5-dehydro-4-deoxy-D-glucuronate = 3-deoxy-D-glycero-2,5-hexodiulosonate. It functions in the pathway glycan metabolism; pectin degradation; 2-dehydro-3-deoxy-D-gluconate from pectin: step 4/5. Its function is as follows. Catalyzes the isomerization of 5-dehydro-4-deoxy-D-glucuronate to 3-deoxy-D-glycero-2,5-hexodiulosonate. This Cereibacter sphaeroides (strain ATCC 17025 / ATH 2.4.3) (Rhodobacter sphaeroides) protein is 4-deoxy-L-threo-5-hexosulose-uronate ketol-isomerase.